Consider the following 491-residue polypeptide: Protein nucleotidyltransferase YdiU (491 aa).

The ATP site is built by Gly94, Gly96, Arg97, Lys117, Asp129, Gly130, Arg180, and Arg187. Asp256 serves as the catalytic Proton acceptor. Residues Asn257 and Asp266 each coordinate Mg(2+). Asp266 contributes to the ATP binding site.

It belongs to the SELO family. The cofactor is Mg(2+). Mn(2+) serves as cofactor.

It carries out the reaction L-seryl-[protein] + ATP = 3-O-(5'-adenylyl)-L-seryl-[protein] + diphosphate. The enzyme catalyses L-threonyl-[protein] + ATP = 3-O-(5'-adenylyl)-L-threonyl-[protein] + diphosphate. It catalyses the reaction L-tyrosyl-[protein] + ATP = O-(5'-adenylyl)-L-tyrosyl-[protein] + diphosphate. The catalysed reaction is L-histidyl-[protein] + UTP = N(tele)-(5'-uridylyl)-L-histidyl-[protein] + diphosphate. It carries out the reaction L-seryl-[protein] + UTP = O-(5'-uridylyl)-L-seryl-[protein] + diphosphate. The enzyme catalyses L-tyrosyl-[protein] + UTP = O-(5'-uridylyl)-L-tyrosyl-[protein] + diphosphate. Functionally, nucleotidyltransferase involved in the post-translational modification of proteins. It can catalyze the addition of adenosine monophosphate (AMP) or uridine monophosphate (UMP) to a protein, resulting in modifications known as AMPylation and UMPylation. The chain is Protein nucleotidyltransferase YdiU from Clostridium botulinum (strain ATCC 19397 / Type A).